The sequence spans 398 residues: Succinate--CoA ligase [ADP-forming] subunit beta (398 aa).

An ATP-grasp domain is found at 9-254; it reads KALLHEFGVP…ETEEDAKEIE (246 aa). Residues Lys-46, 53–55, Glu-109, Ser-112, and Glu-117 each bind ATP; that span reads GRG. Positions 209 and 223 each coordinate Mg(2+). Substrate contacts are provided by residues Asn-274 and 331–333; that span reads GIM.

The protein belongs to the succinate/malate CoA ligase beta subunit family. As to quaternary structure, heterotetramer of two alpha and two beta subunits. The cofactor is Mg(2+).

The enzyme catalyses succinate + ATP + CoA = succinyl-CoA + ADP + phosphate. It catalyses the reaction GTP + succinate + CoA = succinyl-CoA + GDP + phosphate. It participates in carbohydrate metabolism; tricarboxylic acid cycle; succinate from succinyl-CoA (ligase route): step 1/1. Succinyl-CoA synthetase functions in the citric acid cycle (TCA), coupling the hydrolysis of succinyl-CoA to the synthesis of either ATP or GTP and thus represents the only step of substrate-level phosphorylation in the TCA. The beta subunit provides nucleotide specificity of the enzyme and binds the substrate succinate, while the binding sites for coenzyme A and phosphate are found in the alpha subunit. This chain is Succinate--CoA ligase [ADP-forming] subunit beta, found in Bradyrhizobium sp. (strain BTAi1 / ATCC BAA-1182).